The primary structure comprises 212 residues: Uracil phosphoribosyltransferase (212 aa).

5-phospho-alpha-D-ribose 1-diphosphate-binding positions include Arg-78, Arg-103, and Asp-130–Ser-138. Residues Ile-193 and Gly-198–Ala-200 contribute to the uracil site. Asp-199 lines the 5-phospho-alpha-D-ribose 1-diphosphate pocket.

The protein belongs to the UPRTase family. Mg(2+) serves as cofactor.

The enzyme catalyses UMP + diphosphate = 5-phospho-alpha-D-ribose 1-diphosphate + uracil. It participates in pyrimidine metabolism; UMP biosynthesis via salvage pathway; UMP from uracil: step 1/1. Allosterically activated by GTP. Its function is as follows. Catalyzes the conversion of uracil and 5-phospho-alpha-D-ribose 1-diphosphate (PRPP) to UMP and diphosphate. This is Uracil phosphoribosyltransferase from Bordetella avium (strain 197N).